A 196-amino-acid chain; its full sequence is Retinol-binding protein 4 (196 aa).

The signal sequence occupies residues 1 to 21 (MAYTWRALLLLALAFLGSSMA). 3 cysteine pairs are disulfide-bonded: cysteine 25–cysteine 181, cysteine 91–cysteine 195, and cysteine 141–cysteine 150. Glutamine 119 serves as a coordination point for substrate.

The protein belongs to the calycin superfamily. Lipocalin family. In terms of assembly, interacts with TTR. Interaction with TTR prevents its loss by filtration through the kidney glomeruli. Interacts with STRA6.

Its subcellular location is the secreted. Retinol-binding protein that mediates retinol transport in blood plasma. Delivers retinol from the liver stores to the peripheral tissues. Transfers the bound all-trans retinol to STRA6, that then facilitates retinol transport across the cell membrane. This is Retinol-binding protein 4 (RBP4) from Gallus gallus (Chicken).